We begin with the raw amino-acid sequence, 72 residues long: Small ribosomal subunit protein bS18 (72 aa).

It belongs to the bacterial ribosomal protein bS18 family. Part of the 30S ribosomal subunit. Forms a tight heterodimer with protein bS6.

Binds as a heterodimer with protein bS6 to the central domain of the 16S rRNA, where it helps stabilize the platform of the 30S subunit. In Francisella tularensis subsp. novicida (strain U112), this protein is Small ribosomal subunit protein bS18.